The primary structure comprises 647 residues: MAAGVATWLPFARAAAVGWLPLAQQPLPPAPGVKASRGDEVLVVNVSGRRFETWKNTLDRYPDTLLGSSEKEFFYDADSGEYFFDRDPDMFRHVLNFYRTGRLHCPRQECIQAFDEELAFYGLVPELVGDCCLEEYRDRKKENAQRLAEDEEAEQTGDGPALPAGSSIRQRLWRAFENPHTSTAALVFYYVTGFFIAVSVIANVVETIPCRGPARRPPREQPCGDRFPLAFFCMDTACVLIFTGEYLLRLFAAPSRCRFLRSVMSLIDVVAILPYYIGLLVPKNEDVSGAFVTLRVFRVFRIFKFSRHSQGLRILGYTLKSCASELGFLLFSLTMAIIIFATVMFYAEKGTSKTNFTSIPAAFWYTIVTMTTLGYGDMVPSTIAGKIFGSICSLSGVLVIALPVPVIVSNFSRIYHQNQRADKRRAQQKVRLARIRLAKSGTTNAFLQYKQNGGLEDNGSGEEQALCVRNRSAFEQQHHHLLHCLEKTTCHEFTDELTFSEALGAVSLGGRTSRSTSVSSQPVGPSSLLSSCCPRRAKRRAIRLANSTASVSRGSMQELDTLAGLRRSPGPQSRSSLNAKPHDSLDLNCDSRDFVAAIISIPTPPANTPDESQPSSPGGGGRASSTLRNSRLGTPCLLPETVKISSL.

Residues 1–183 (MAAGVATWLP…RAFENPHTST (183 aa)) are Cytoplasmic-facing. The interaction with KCNIP1, KCNIP2, and other family members stretch occupies residues 2–20 (AAGVATWLPFARAAAVGWL). Zn(2+) contacts are provided by H104, C131, and C132. The interval 144–164 (AQRLAEDEEAEQTGDGPALPA) is disordered. The chain crosses the membrane as a helical span at residues 184–205 (AALVFYYVTGFFIAVSVIANVV). At 206-230 (ETIPCRGPARRPPREQPCGDRFPLA) the chain is on the extracellular side. A helical membrane pass occupies residues 231–252 (FFCMDTACVLIFTGEYLLRLFA). Over 253-263 (APSRCRFLRSV) the chain is Cytoplasmic. The helical transmembrane segment at 264–284 (MSLIDVVAILPYYIGLLVPKN) threads the bilayer. At 285 to 287 (EDV) the chain is on the extracellular side. Residues 288–308 (SGAFVTLRVFRVFRIFKFSRH) traverse the membrane as a helical; Voltage-sensor segment. Residues 309–323 (SQGLRILGYTLKSCA) lie on the Cytoplasmic side of the membrane. Positions 310–323 (QGLRILGYTLKSCA) are S4-S5 linker. The chain crosses the membrane as a helical span at residues 324 to 345 (SELGFLLFSLTMAIIIFATVMF). Residues 346–359 (YAEKGTSKTNFTSI) are Extracellular-facing. The helical intramembrane region spans 360 to 371 (PAAFWYTIVTMT). Positions 372-377 (TLGYGD) match the Selectivity filter motif. An intramembrane segment occupies 372-379 (TLGYGDMV). At 380–386 (PSTIAGK) the chain is on the extracellular side. The helical transmembrane segment at 387 to 415 (IFGSICSLSGVLVIALPVPVIVSNFSRIY) threads the bilayer. Residues 416–647 (HQNQRADKRR…LPETVKISSL (232 aa)) lie on the Cytoplasmic side of the membrane. The interval 474-489 (FEQQHHHLLHCLEKTT) is required for dendritic targeting. Residues 510–520 (GRTSRSTSVSS) show a composition bias toward low complexity. The segment at 510–531 (GRTSRSTSVSSQPVGPSSLLSS) is disordered. Over residues 521–530 (QPVGPSSLLS) the composition is skewed to polar residues. Residue S555 is modified to Phosphoserine. Disordered stretches follow at residues 564–584 (GLRR…PHDS) and 601–634 (IPTP…RLGT).

It belongs to the potassium channel family. D (Shal) (TC 1.A.1.2) subfamily. Kv4.1/KCND1 sub-subfamily. In terms of assembly, component of heteromultimeric potassium channels. Identified in potassium channel complexes containing KCND1, KCND2, KCND3, KCNIP1, KCNIP2, KCNIP3, KCNIP4, DPP6 and DPP10. Detected in carotid body chemoreceptor cells and in frontal cortex.

The protein resides in the cell membrane. The enzyme catalyses K(+)(in) = K(+)(out). In terms of biological role, A-type voltage-gated potassium channel that mediates transmembrane potassium transport in excitable membranes in the brain. Mediates A-type current I(SA) in suprachiasmatic nucleus (SCN) neurons. Exhibits a low-threshold A-type current with a hyperpolarized steady-state inactivation midpoint and the recovery process was steeply voltage-dependent, with recovery being markedly faster at more negative potentials. May regulates repetitive firing rates in the suprachiasmatic nucleus (SCN) neurons and circadian rhythms in neuronal excitability and behavior. Contributes to the regulation of the circadian rhythm of action potential firing in suprachiasmatic nucleus neurons, which regulates the circadian rhythm of locomotor activity. The regulatory subunit KCNIP1 modulates the kinetics of channel inactivation, increases the current amplitudes and accelerates recovery from inactivation, shifts activation in a depolarizing direction. The regulatory subunit DPP10 decreases the voltage sensitivity of the inactivation channel gating. This Oryctolagus cuniculus (Rabbit) protein is A-type voltage-gated potassium channel KCND1.